The following is a 453-amino-acid chain: tRNA modification GTPase MnmE (453 aa).

Residues arginine 22, glutamate 79, and lysine 119 each contribute to the (6S)-5-formyl-5,6,7,8-tetrahydrofolate site. Residues 215–376 (GMKVVIAGRP…LRNHLKECMG (162 aa)) form the TrmE-type G domain. Asparagine 225 lines the K(+) pocket. GTP contacts are provided by residues 225–230 (NAGKSS), 244–250 (TDIAGTT), 269–272 (DTAG), and 334–337 (NKAD). Serine 229 contributes to the Mg(2+) binding site. 3 residues coordinate K(+): threonine 244, isoleucine 246, and threonine 249. Threonine 250 serves as a coordination point for Mg(2+). (6S)-5-formyl-5,6,7,8-tetrahydrofolate is bound at residue lysine 453.

This sequence belongs to the TRAFAC class TrmE-Era-EngA-EngB-Septin-like GTPase superfamily. TrmE GTPase family. In terms of assembly, homodimer. Heterotetramer of two MnmE and two MnmG subunits. K(+) is required as a cofactor.

Its subcellular location is the cytoplasm. Exhibits a very high intrinsic GTPase hydrolysis rate. Involved in the addition of a carboxymethylaminomethyl (cmnm) group at the wobble position (U34) of certain tRNAs, forming tRNA-cmnm(5)s(2)U34. This is tRNA modification GTPase MnmE from Vibrio vulnificus (strain YJ016).